The following is a 286-amino-acid chain: MRLHKIFYALFENRLSDNLEELVQGKKAVESPTAFLLGGQPGSGKTSLRSAIFEETQGNVIVIDNDTFKQQHPNFDELVKLYEKDVVKHVTPYSNRMTEAIISRLSDKGYNLVIEGTGRTTDVPIQTATMLQAKGYETKMYVMAVPKINSYLGTIERYETMYADDPMTARATPKQAHDIAVKNLPTNLETLHKTGLFSDIRLYNREGVKLYSSLETPSISPKETLERELNRKISGKEIQPTLERIEQKMVQNQHQETPEFKAIQQKMESLQPPTPPIPKTPKLPGI.

Position 39 to 46 (39 to 46 (GQPGSGKT)) interacts with ATP. Residues 249–286 (MVQNQHQETPEFKAIQQKMESLQPPTPPIPKTPKLPGI) are disordered. Residues 272 to 286 (PPTPPIPKTPKLPGI) show a composition bias toward pro residues.

The protein belongs to the zeta toxin family. As to quaternary structure, in the presence of the epsilon antitoxin, forms an inactive PezA(2)PezT(2) heterotetramer.

It catalyses the reaction UDP-N-acetyl-alpha-D-glucosamine + ATP = UDP-N-acetyl-alpha-D-glucosamine 3'-phosphate + ADP + H(+). Its function is as follows. Toxic component of a type II toxin-antitoxin (TA) system. Phosphorylates UDP-N-acetyl-D-glucosamine (UNAG) on the 3'-hydroxyl group of the N-acetyl-D-glucosamine moiety, yielding UNAG-3P. UNAG-3P inhibits MurA, the first committed step in cell wall synthesis, which is then blocked. Phosphorylation is inhibited by cognate epsilon antitoxin. Part of a postsegregational killing (PSK) system involved in the killing of plasmid-free cells. The zeta toxin induces programmed cell death. This chain is Toxin zeta, found in Enterococcus hirae.